The primary structure comprises 886 residues: Isoleucine--tRNA ligase (886 aa).

The 'HIGH' region motif lies at 60-70 (PYANGDIHIGH). Glu-546 lines the L-isoleucyl-5'-AMP pocket. A 'KMSKS' region motif is present at residues 587-591 (KMSKS). Lys-590 is an ATP binding site. Residues Cys-856, Cys-859, Cys-870, and Cys-873 each coordinate Zn(2+).

This sequence belongs to the class-I aminoacyl-tRNA synthetase family. IleS type 1 subfamily. Monomer. Requires Zn(2+) as cofactor.

The protein localises to the cytoplasm. The catalysed reaction is tRNA(Ile) + L-isoleucine + ATP = L-isoleucyl-tRNA(Ile) + AMP + diphosphate. Catalyzes the attachment of isoleucine to tRNA(Ile). As IleRS can inadvertently accommodate and process structurally similar amino acids such as valine, to avoid such errors it has two additional distinct tRNA(Ile)-dependent editing activities. One activity is designated as 'pretransfer' editing and involves the hydrolysis of activated Val-AMP. The other activity is designated 'posttransfer' editing and involves deacylation of mischarged Val-tRNA(Ile). The sequence is that of Isoleucine--tRNA ligase from Mesomycoplasma hyopneumoniae (strain 232) (Mycoplasma hyopneumoniae).